Reading from the N-terminus, the 97-residue chain is Coiled-coil domain-containing protein 167 (97 aa).

Positions 10–79 form a coiled coil; it reads GVALEIDGLE…LRQENRKNML (70 aa). The chain crosses the membrane as a helical span at residues 77 to 97; sequence NMLLSVAIFLLLTVIYAYWAL.

Its subcellular location is the membrane. The chain is Coiled-coil domain-containing protein 167 (CCDC167) from Bos taurus (Bovine).